Here is a 1417-residue protein sequence, read N- to C-terminus: DNA-directed RNA polymerase subunit beta' (1417 aa).

Zn(2+) contacts are provided by Cys68, Cys70, Cys83, and Cys86. Asp458, Asp460, and Asp462 together coordinate Mg(2+). Positions 811, 884, 891, and 894 each coordinate Zn(2+).

It belongs to the RNA polymerase beta' chain family. In terms of assembly, the RNAP catalytic core consists of 2 alpha, 1 beta, 1 beta' and 1 omega subunit. When a sigma factor is associated with the core the holoenzyme is formed, which can initiate transcription. Mg(2+) serves as cofactor. It depends on Zn(2+) as a cofactor.

It catalyses the reaction RNA(n) + a ribonucleoside 5'-triphosphate = RNA(n+1) + diphosphate. Its function is as follows. DNA-dependent RNA polymerase catalyzes the transcription of DNA into RNA using the four ribonucleoside triphosphates as substrates. The protein is DNA-directed RNA polymerase subunit beta' of Francisella tularensis subsp. mediasiatica (strain FSC147).